Here is a 475-residue protein sequence, read N- to C-terminus: Sulfate adenylyltransferase subunit 1 (475 aa).

Residues 25–239 form the tr-type G domain; sequence KSLLRFLTCG…EVLETVEIQR (215 aa). A G1 region spans residues 34 to 41; that stretch reads GSVDDGKS. 34–41 provides a ligand contact to GTP; sequence GSVDDGKS. The interval 92-96 is G2; it reads GITID. The interval 113-116 is G3; the sequence is DTPG. Residues 113–117 and 168–171 contribute to the GTP site; these read DTPGH and NKMD. The G4 stretch occupies residues 168-171; sequence NKMD. Residues 206–208 form a G5 region; sequence SAL.

Belongs to the TRAFAC class translation factor GTPase superfamily. Classic translation factor GTPase family. CysN/NodQ subfamily. As to quaternary structure, heterodimer composed of CysD, the smaller subunit, and CysN.

It catalyses the reaction sulfate + ATP + H(+) = adenosine 5'-phosphosulfate + diphosphate. The protein operates within sulfur metabolism; hydrogen sulfide biosynthesis; sulfite from sulfate: step 1/3. With CysD forms the ATP sulfurylase (ATPS) that catalyzes the adenylation of sulfate producing adenosine 5'-phosphosulfate (APS) and diphosphate, the first enzymatic step in sulfur assimilation pathway. APS synthesis involves the formation of a high-energy phosphoric-sulfuric acid anhydride bond driven by GTP hydrolysis by CysN coupled to ATP hydrolysis by CysD. The polypeptide is Sulfate adenylyltransferase subunit 1 (Shigella dysenteriae serotype 1 (strain Sd197)).